The following is a 290-amino-acid chain: uncharacterized protein (290 aa).

5 helical membrane passes run 10-27 (FFVARLLVVLYLSTLLLI), 32-54 (VNYIAVGILSVYFLINVYVYFFS), 69-91 (ILVPAFVFFSKILYSIYALGVLI), 100-117 (VLAGIILLETYGLAFFYF), and 121-143 (YLLMISHFILFLALFFTSYNFEY). The stretch at 147–183 (VGKERKRILKLKKNYHKLLKEFSNFEREKRMFSNLRK) forms a coiled coil.

It is found in the cell membrane. This is an uncharacterized protein from Aquifex aeolicus (strain VF5).